Reading from the N-terminus, the 101-residue chain is Large ribosomal subunit protein uL23 (101 aa).

The protein belongs to the universal ribosomal protein uL23 family. As to quaternary structure, part of the 50S ribosomal subunit. Contacts protein L29, and trigger factor when it is bound to the ribosome.

Functionally, one of the early assembly proteins it binds 23S rRNA. One of the proteins that surrounds the polypeptide exit tunnel on the outside of the ribosome. Forms the main docking site for trigger factor binding to the ribosome. This chain is Large ribosomal subunit protein uL23, found in Mannheimia succiniciproducens (strain KCTC 0769BP / MBEL55E).